The primary structure comprises 223 residues: Putative germin-like protein 2-3 (223 aa).

A signal peptide spans 1-28; sequence MAAIRASFLLAAAALLALWCSDHGGVVA. Cys-38 and Cys-53 are oxidised to a cystine. The 151-residue stretch at 67 to 217 folds into the Cupin type-1 domain; the sequence is SGLHMAGNTT…AFQVEKTVVD (151 aa). Asn-74 carries N-linked (GlcNAc...) asparagine glycosylation. Mn(2+)-binding residues include His-115, His-117, Glu-122, and His-163.

Belongs to the germin family. As to quaternary structure, oligomer (believed to be a pentamer but probably hexamer).

The protein localises to the secreted. It localises to the extracellular space. It is found in the apoplast. Functionally, may play a role in plant defense. Probably has no oxalate oxidase activity even if the active site is conserved. This chain is Putative germin-like protein 2-3, found in Oryza sativa subsp. japonica (Rice).